A 342-amino-acid polypeptide reads, in one-letter code: N-acetyl-gamma-glutamyl-phosphate reductase (342 aa).

C147 is a catalytic residue.

The protein belongs to the NAGSA dehydrogenase family. Type 1 subfamily.

It is found in the cytoplasm. It carries out the reaction N-acetyl-L-glutamate 5-semialdehyde + phosphate + NADP(+) = N-acetyl-L-glutamyl 5-phosphate + NADPH + H(+). It participates in amino-acid biosynthesis; L-arginine biosynthesis; N(2)-acetyl-L-ornithine from L-glutamate: step 3/4. Functionally, catalyzes the NADPH-dependent reduction of N-acetyl-5-glutamyl phosphate to yield N-acetyl-L-glutamate 5-semialdehyde. The sequence is that of N-acetyl-gamma-glutamyl-phosphate reductase from Campylobacter jejuni subsp. jejuni serotype O:23/36 (strain 81-176).